Reading from the N-terminus, the 376-residue chain is Queuine tRNA-ribosyltransferase (376 aa).

The active-site Proton acceptor is the D92. Substrate contacts are provided by residues D92–F96, D146, Q190, and G217. Positions G248–D254 are RNA binding. D267 serves as the catalytic Nucleophile. Residues T272–R276 form an RNA binding; important for wobble base 34 recognition region. C305, C307, C310, and H337 together coordinate Zn(2+).

Belongs to the queuine tRNA-ribosyltransferase family. As to quaternary structure, homodimer. Within each dimer, one monomer is responsible for RNA recognition and catalysis, while the other monomer binds to the replacement base PreQ1. The cofactor is Zn(2+).

The enzyme catalyses 7-aminomethyl-7-carbaguanine + guanosine(34) in tRNA = 7-aminomethyl-7-carbaguanosine(34) in tRNA + guanine. The protein operates within tRNA modification; tRNA-queuosine biosynthesis. Catalyzes the base-exchange of a guanine (G) residue with the queuine precursor 7-aminomethyl-7-deazaguanine (PreQ1) at position 34 (anticodon wobble position) in tRNAs with GU(N) anticodons (tRNA-Asp, -Asn, -His and -Tyr). Catalysis occurs through a double-displacement mechanism. The nucleophile active site attacks the C1' of nucleotide 34 to detach the guanine base from the RNA, forming a covalent enzyme-RNA intermediate. The proton acceptor active site deprotonates the incoming PreQ1, allowing a nucleophilic attack on the C1' of the ribose to form the product. After dissociation, two additional enzymatic reactions on the tRNA convert PreQ1 to queuine (Q), resulting in the hypermodified nucleoside queuosine (7-(((4,5-cis-dihydroxy-2-cyclopenten-1-yl)amino)methyl)-7-deazaguanosine). This is Queuine tRNA-ribosyltransferase from Stenotrophomonas maltophilia (strain K279a).